The chain runs to 174 residues: MSTVGFHTCASCVDGPKSIKCVSKYRISVYKTLGLDVVKCRLPADCGVNCGMPAAFVLEQGHPKLTMDGYCGEKHRGYVLSGAWRHAQLRSLNAELDTLEAREESLRAQIKALSAGDHCPAVLAYVPKKLTKLKAEVHDVTGKKQVCITGLVDVMDSALVRLAPDSPPKKISSL.

The stretch at 86–116 (HAQLRSLNAELDTLEAREESLRAQIKALSAG) forms a coiled coil.

This sequence belongs to the virgaviridae suppressor of RNA silencing family.

In terms of biological role, suppressor of RNA-mediated gene silencing, also known as post-transcriptional gene silencing (PTGS), a mechanism of plant viral defense that performs sequence-specific inhibition of viral mRNAs expression. The polypeptide is Suppressor of RNA silencing (Soil-borne wheat mosaic virus (strain United States/Nebraska/1981) (SBWMV)).